Here is a 487-residue protein sequence, read N- to C-terminus: Recombining binding protein suppressor of hairless (487 aa).

DNA-binding regions lie at residues 44-54 (QKSYGNEKRFF) and 152-157 (SKPSKK). Lysine 162 is modified (N6-acetyllysine). The tract at residues 179-184 (RLRSQT) is DNA-binding. An IPT/TIG domain is found at 342 to 432 (PVVESLQLNG…YSTSLTFTYT (91 aa)). A compositionally biased stretch (polar residues) spans 452–468 (SSQVPPNESNTNSEGSY). The tract at residues 452–487 (SSQVPPNESNTNSEGSYTNVSTNSTSVTSSTATVVS) is disordered. The span at 469-487 (TNVSTNSTSVTSSTATVVS) shows a compositional bias: low complexity.

It belongs to the Su(H) family. In terms of assembly, interacts with activated NOTCH1, NOTCH2 or NOTCH3. Interacts with MINT/SHARP. This interaction may mediate the recruitment of large corepressor complexes containing proteins such as HDAC1, HDAC2, NCOR2, SAP30, FHL1/KYOT2 and CIR1. Interacts with EP300, MAML1 and PTF1A. Interacts with RITA1, leading to nuclear export, prevent the interaction between RBPJ and NICD product and subsequent down-regulation of the Notch signaling pathway. Interacts with SNW1. Interacts with CHCHD2 and CXXC5. Interacts with BEND6 (via BEN domain). Interacts with NKAPL. Interacts with ZMIZ1. Interacts with RBM15. Interacts with L3MBTL3 and KDM1A; the interaction with KDM1A is weaker in the absence of L3MBTL3 and the interaction with L3MBTL3 is impaired by Notch-derived peptides containing the intracellular domain (NICD).

It is found in the nucleus. The protein localises to the cytoplasm. In terms of biological role, transcriptional regulator that plays a central role in Notch signaling, a signaling pathway involved in cell-cell communication that regulates a broad spectrum of cell-fate determinations. Acts as a transcriptional repressor when it is not associated with Notch proteins. When associated with some NICD product of Notch proteins (Notch intracellular domain), it acts as a transcriptional activator that activates transcription of Notch target genes. Probably represses or activates transcription via the recruitment of chromatin remodeling complexes containing histone deacetylase or histone acetylase proteins, respectively. Specifically binds to the immunoglobulin kappa-type J segment recombination signal sequence. Binds specifically to methylated DNA. Binds to the oxygen responsive element of COX4I2 and activates its transcription under hypoxia conditions (4% oxygen). Negatively regulates the phagocyte oxidative burst in response to bacterial infection by repressing transcription of NADPH oxidase subunits. In Bos taurus (Bovine), this protein is Recombining binding protein suppressor of hairless (RBPJ).